Reading from the N-terminus, the 564-residue chain is Urease subunit alpha (564 aa).

In terms of domain architecture, Urease spans 126 to 564; that stretch reads GGIDTHIHFI…LPMAQRYFLF (439 aa). Ni(2+)-binding residues include histidine 131, histidine 133, and lysine 214. N6-carboxylysine is present on lysine 214. Histidine 216 provides a ligand contact to substrate. Histidine 243 and histidine 269 together coordinate Ni(2+). Residue histidine 317 is the Proton donor of the active site. Aspartate 357 serves as a coordination point for Ni(2+).

The protein belongs to the metallo-dependent hydrolases superfamily. Urease alpha subunit family. In terms of assembly, heterotrimer of UreA (gamma), UreB (beta) and UreC (alpha) subunits. Three heterotrimers associate to form the active enzyme. Requires Ni cation as cofactor. Carboxylation allows a single lysine to coordinate two nickel ions.

Its subcellular location is the cytoplasm. It catalyses the reaction urea + 2 H2O + H(+) = hydrogencarbonate + 2 NH4(+). The protein operates within nitrogen metabolism; urea degradation; CO(2) and NH(3) from urea (urease route): step 1/1. This Burkholderia pseudomallei (strain 1710b) protein is Urease subunit alpha.